The primary structure comprises 190 residues: MFKSTLAAMAAVFALSALSPAAMAAKGDPHVLLTTSAGNIELELDKQKAPVSVQNFVDYVNSGFYNNTTFHRVIPGFMIQGGGFTEQMQQKKPNPPIKNEADNGLRNTRGTIAMARTADKDSATSQFFINVADNAFLDHGQRDFGYAVFGKVVKGMDVADKISQVPTHDVGPYQNVPSKPVVILSAKVLP.

Residues 1 to 24 (MFKSTLAAMAAVFALSALSPAAMA) form the signal peptide. A PPIase cyclophilin-type domain is found at 27 to 188 (GDPHVLLTTS…KPVVILSAKV (162 aa)).

The protein belongs to the cyclophilin-type PPIase family.

The protein localises to the periplasm. The enzyme catalyses [protein]-peptidylproline (omega=180) = [protein]-peptidylproline (omega=0). PPIases accelerate the folding of proteins. It catalyzes the cis-trans isomerization of proline imidic peptide bonds in oligopeptides. In Escherichia coli O157:H7, this protein is Peptidyl-prolyl cis-trans isomerase A (ppiA).